The following is a 148-amino-acid chain: Hemoglobin subunit alpha (148 aa).

Residue Ser1 is modified to N-acetylserine. The 141-residue stretch at 8 to 148 (DYSAADRAEL…VCHELSSRYR (141 aa)) folds into the Globin domain. His66 contacts O2. Heme b is bound at residue His95.

The protein belongs to the globin family. In terms of assembly, heterotetramer of two alpha chains and two beta chains. Red blood cells.

Involved in oxygen transport from the lung to the various peripheral tissues. This chain is Hemoglobin subunit alpha (HBA), found in Heterodontus portusjacksoni (Port Jackson shark).